A 780-amino-acid chain; its full sequence is Subtilisin-like protease SBT5.1 (780 aa).

Residues M1–S25 form the signal peptide. A propeptide spans E26–H106 (activation peptide). Positions Y33–H106 constitute an Inhibitor I9 domain. The region spanning S110–S617 is the Peptidase S8 domain. Residue D147 is the Charge relay system of the active site. A glycan (N-linked (GlcNAc...) asparagine) is linked at N197. H215 (charge relay system) is an active-site residue. N230 is a glycosylation site (N-linked (GlcNAc...) asparagine). The PA domain occupies I385–Y469. N-linked (GlcNAc...) asparagine glycosylation is present at N471. S550 functions as the Charge relay system in the catalytic mechanism. Residue N776 is glycosylated (N-linked (GlcNAc...) asparagine).

It belongs to the peptidase S8 family.

It is found in the secreted. The sequence is that of Subtilisin-like protease SBT5.1 from Arabidopsis thaliana (Mouse-ear cress).